The sequence spans 699 residues: Elongation factor G (699 aa).

Positions 8–283 (EHIRNIGICA…AIVDFLPSPI (276 aa)) constitute a tr-type G domain. Residues 17-24 (AHIDAGKT), 81-85 (DTPGH), and 135-138 (NKMD) each bind GTP.

This sequence belongs to the TRAFAC class translation factor GTPase superfamily. Classic translation factor GTPase family. EF-G/EF-2 subfamily.

It is found in the cytoplasm. Catalyzes the GTP-dependent ribosomal translocation step during translation elongation. During this step, the ribosome changes from the pre-translocational (PRE) to the post-translocational (POST) state as the newly formed A-site-bound peptidyl-tRNA and P-site-bound deacylated tRNA move to the P and E sites, respectively. Catalyzes the coordinated movement of the two tRNA molecules, the mRNA and conformational changes in the ribosome. This chain is Elongation factor G, found in Rickettsia typhi (strain ATCC VR-144 / Wilmington).